A 585-amino-acid polypeptide reads, in one-letter code: Arginine--tRNA ligase (585 aa).

The 'HIGH' region motif lies at 131–141; sequence ANPTGPMHVGH.

It belongs to the class-I aminoacyl-tRNA synthetase family. In terms of assembly, monomer.

Its subcellular location is the cytoplasm. The enzyme catalyses tRNA(Arg) + L-arginine + ATP = L-arginyl-tRNA(Arg) + AMP + diphosphate. This chain is Arginine--tRNA ligase, found in Brucella suis (strain ATCC 23445 / NCTC 10510).